A 306-amino-acid chain; its full sequence is tRNA pseudouridine synthase B (306 aa).

The Nucleophile role is filled by D39.

The protein belongs to the pseudouridine synthase TruB family. Type 1 subfamily.

It carries out the reaction uridine(55) in tRNA = pseudouridine(55) in tRNA. Its function is as follows. Responsible for synthesis of pseudouridine from uracil-55 in the psi GC loop of transfer RNAs. The protein is tRNA pseudouridine synthase B of Arthrobacter sp. (strain FB24).